Here is a 349-residue protein sequence, read N- to C-terminus: AA9 family lytic polysaccharide monooxygenase A (349 aa).

Positions 1–19 are cleaved as a signal peptide; the sequence is MKSTFGLLALAAAAKLVSA. Positions 20 and 102 each coordinate Cu(2+). The cysteines at positions 62 and 183 are disulfide-linked. His169 lines the O2 pocket. Tyr180 is a binding site for Cu(2+). A disordered region spans residues 233–304; sequence DGSSSGSSGS…SGSNSGSDSC (72 aa). Low complexity-rich tracts occupy residues 234–262 and 269–304; these read GSSS…AVPT and TSAT…SDSC. The CBM1 domain occupies 311–347; the sequence is GSVKIYGQCGGQNYSGPTSCEAGLICKEWNPYYHQCV. The N-linked (GlcNAc...) asparagine glycan is linked to Asn323.

It belongs to the polysaccharide monooxygenase AA9 family. Requires Cu(2+) as cofactor.

It is found in the secreted. The catalysed reaction is [(1-&gt;4)-beta-D-glucosyl]n+m + reduced acceptor + O2 = 4-dehydro-beta-D-glucosyl-[(1-&gt;4)-beta-D-glucosyl]n-1 + [(1-&gt;4)-beta-D-glucosyl]m + acceptor + H2O.. In terms of biological role, lytic polysaccharide monooxygenase (LPMO) that depolymerizes crystalline and amorphous polysaccharides via the oxidation of scissile alpha- or beta-(1-4)-glycosidic bonds, yielding C4 oxidation products. Catalysis by LPMOs requires the reduction of the active-site copper from Cu(II) to Cu(I) by a reducing agent and H(2)O(2) or O(2) as a cosubstrate. The protein is AA9 family lytic polysaccharide monooxygenase A (eglD) of Aspergillus fumigatus (strain CBS 144.89 / FGSC A1163 / CEA10) (Neosartorya fumigata).